Consider the following 296-residue polypeptide: tRNA uridine(34) hydroxylase (296 aa).

Residues 121-215 form the Rhodanese domain; the sequence is AQPDVAVIDT…YLEDIPQDQS (95 aa). The active-site Cysteine persulfide intermediate is Cys175.

This sequence belongs to the TrhO family.

It carries out the reaction uridine(34) in tRNA + AH2 + O2 = 5-hydroxyuridine(34) in tRNA + A + H2O. Functionally, catalyzes oxygen-dependent 5-hydroxyuridine (ho5U) modification at position 34 in tRNAs. The protein is tRNA uridine(34) hydroxylase of Roseobacter denitrificans (strain ATCC 33942 / OCh 114) (Erythrobacter sp. (strain OCh 114)).